Reading from the N-terminus, the 268-residue chain is Glutamate racemase (268 aa).

Substrate is bound by residues 10 to 11 (DS) and 42 to 43 (YG). C73 functions as the Proton donor/acceptor in the catalytic mechanism. Position 74–75 (74–75 (NT)) interacts with substrate. The active-site Proton donor/acceptor is C184. 185-186 (TH) is a binding site for substrate.

Belongs to the aspartate/glutamate racemases family.

The catalysed reaction is L-glutamate = D-glutamate. It participates in cell wall biogenesis; peptidoglycan biosynthesis. Functionally, provides the (R)-glutamate required for cell wall biosynthesis. The protein is Glutamate racemase of Limosilactobacillus fermentum (strain NBRC 3956 / LMG 18251) (Lactobacillus fermentum).